Here is a 309-residue protein sequence, read N- to C-terminus: UDP-URONIC ACID TRANSPORTER 1 (309 aa).

10 helical membrane passes run 9-29 (TLFI…VLLL), 43-63 (IFLT…SIVF), 78-98 (FLKV…GNIS), 104-124 (VSFN…FAYL), 131-151 (AWVT…ASGG), 152-172 (EPGF…ARAF), 193-213 (LMLY…LFME), 231-251 (WILL…NFLV), 256-278 (SALT…SILI), and 283-302 (VTVM…VAYG).

This sequence belongs to the TPT transporter family. TPT (TC 2.A.7.9) subfamily. In terms of tissue distribution, ubiquitous.

It localises to the golgi apparatus membrane. Functionally, UDP-glucuronic acid transporter that modulates the polysaccharide composition of seed mucilage. Transports UDP-glucuronic acid (UDP-GlcA) and UDP-galacturonic acid (UDP-GalA) in vitro. The chain is UDP-URONIC ACID TRANSPORTER 1 from Arabidopsis thaliana (Mouse-ear cress).